The sequence spans 590 residues: Plasmepsin V (590 aa).

The Lumenal segment spans residues 1 to 544 (MNNYFLRKEN…EKENIFLKVS (544 aa)). Residues 33-81 (CNNVENKIDNVGKKIENVGKKIGDMENKNDNVENKNDNVGNKNDNVKNA) adopt a coiled-coil conformation. The Peptidase A1 domain maps to 100–514 (YFLDIDIGKP…DLQQNQIAFI (415 aa)). The active site involves aspartate 118. 7 disulfides stabilise this stretch: cysteine 128-cysteine 211, cysteine 131-cysteine 134, cysteine 155-cysteine 166, cysteine 160-cysteine 171, cysteine 259-cysteine 518, cysteine 389-cysteine 434, and cysteine 443-cysteine 479. Residues 282-291 (KEKQKMDKSD) are compositionally biased toward basic and acidic residues. The interval 282–316 (KEKQKMDKSDNNSSNKGNVSIKLKNNDKNDDEENN) is disordered. Low complexity predominate over residues 292 to 304 (NNSSNKGNVSIKL). The active site involves aspartate 365. Residues 545–565 (YINLYCLWLLLALTILLSLIL) form a helical membrane-spanning segment. Over 566-590 (YVRKMFYMDYFPLSDQNKSPIQEST) the chain is Cytoplasmic.

This sequence belongs to the peptidase A1 family. Component of a complex composed of SPC25 and PMV; the interaction is mediated via the transmembrane domains. The complex interacts with the SEC61 channel-forming translocon complex and is involved in the recognition and import of PEXEL motif-containing proteins into the ER for subsequent export. It is not clear if the zymogen has a cleavable propeptide. In vitro, appears to be cleaved between Asn-80 and Ala-81. Cleavage of the putative propeptide is dispensable for catalytic activity.

It is found in the endoplasmic reticulum membrane. Inhibited by peptidomimetic inhibitor WEHI-842. Inhibited by Cu(2+) and Hg(2+). In terms of biological role, during the asexual blood stage, plays an essential role in the export of several proteins into the host erythrocytes by cleaving the pentameric localization motif RxLxE/Q/D (termed Plasmodium export element (PEXEL)) located downstream of the N-terminal secretory signal sequence. Specifically, cleaves after the leucine residue in the RxLxE/Q/D (or RxLxxE) motif of exported proteins including RESA, EMP2, EMP3, KAHRP, RIF/Rifin and STEVOR. Also, by regulating protein export, plays an essential role in gametocyte development and thus, parasite transmission to the mosquito vector. The sequence is that of Plasmepsin V from Plasmodium falciparum (isolate 3D7).